Reading from the N-terminus, the 473-residue chain is RuvB-like helicase 2 (473 aa).

Gly76–Thr83 contacts ATP.

This sequence belongs to the RuvB family. In terms of assembly, may form heterododecamers with RVB1. Component of the SWR1 chromatin remodeling complex, the INO80 chromatin remodeling complex, and of the R2TP complex.

Its subcellular location is the nucleus. The catalysed reaction is ATP + H2O = ADP + phosphate + H(+). In terms of biological role, DNA helicase which participates in several chromatin remodeling complexes, including the SWR1 and the INO80 complexes. The SWR1 complex mediates the ATP-dependent exchange of histone H2A for the H2A variant HZT1 leading to transcriptional regulation of selected genes by chromatin remodeling. The INO80 complex remodels chromatin by shifting nucleosomes and is involved in DNA repair. Also involved in pre-rRNA processing. The chain is RuvB-like helicase 2 (RVB2) from Gibberella zeae (strain ATCC MYA-4620 / CBS 123657 / FGSC 9075 / NRRL 31084 / PH-1) (Wheat head blight fungus).